Consider the following 240-residue polypeptide: Ribitol-5-phosphate cytidylyltransferase (240 aa).

Residues 8-11 (FAGG) and 81-87 (GETGQMS) each bind CTP.

This sequence belongs to the IspD/TarI cytidylyltransferase family. TarI subfamily.

The catalysed reaction is D-ribitol 5-phosphate + CTP + H(+) = CDP-L-ribitol + diphosphate. It functions in the pathway cell wall biogenesis; poly(ribitol phosphate) teichoic acid biosynthesis. Functionally, catalyzes the transfer of the cytidylyl group of CTP to D-ribitol 5-phosphate. The sequence is that of Ribitol-5-phosphate cytidylyltransferase from Streptococcus agalactiae serotype V (strain ATCC BAA-611 / 2603 V/R).